Here is a 285-residue protein sequence, read N- to C-terminus: tRNA pseudouridine synthase B (285 aa).

Catalysis depends on Asp40, which acts as the Nucleophile.

Belongs to the pseudouridine synthase TruB family. Type 1 subfamily.

It catalyses the reaction uridine(55) in tRNA = pseudouridine(55) in tRNA. Responsible for synthesis of pseudouridine from uracil-55 in the psi GC loop of transfer RNAs. The protein is tRNA pseudouridine synthase B of Caldanaerobacter subterraneus subsp. tengcongensis (strain DSM 15242 / JCM 11007 / NBRC 100824 / MB4) (Thermoanaerobacter tengcongensis).